We begin with the raw amino-acid sequence, 273 residues long: Octanoyltransferase LipM (273 aa).

A BPL/LPL catalytic domain is found at 33–244 (GKTPPTLRFY…AFTRLYAVEF (212 aa)). Cys-146 (acyl-thioester intermediate) is an active-site residue.

The protein belongs to the octanoyltransferase LipM family. Monomer.

The catalysed reaction is octanoyl-[ACP] + L-lysyl-[protein] = N(6)-octanoyl-L-lysyl-[protein] + holo-[ACP] + H(+). Its pathway is protein modification; protein lipoylation via endogenous pathway; protein N(6)-(lipoyl)lysine from octanoyl-[acyl-carrier-protein]. Functionally, catalyzes the transfer of endogenously produced octanoic acid from octanoyl-acyl-carrier-protein onto the lipoyl domain of GcvH, an intermediate carrier during protein lipoylation. The sequence is that of Octanoyltransferase LipM from Moorella thermoacetica (strain ATCC 39073 / JCM 9320).